An 835-amino-acid chain; its full sequence is uncharacterized protein (835 aa).

Disordered stretches follow at residues 1–38 (MKTS…VGSR), 317–477 (DFDL…QSGR), 489–668 (SLSK…IKRR), 721–750 (DLEN…VSSF), and 810–835 (QEQQ…ELMF). 3 stretches are compositionally biased toward low complexity: residues 7–37 (STVP…TVGS), 328–351 (NNNN…TPTT), and 361–395 (SSTN…SGSS). Composition is skewed to polar residues over residues 396 to 406 (IGNRTEVSSSI) and 415 to 424 (IIRSKSSLGT). The span at 432–442 (GGSGGGGGGGM) shows a compositional bias: gly residues. The span at 449-477 (PISKTPTTMITKTASSSSPNLATSTQSGR) shows a compositional bias: polar residues. Residues 489-510 (SLSKQSSSSNLTRSLPPIIKSP) are compositionally biased toward low complexity. Residues 511–521 (ISPPGPTPPAP) are compositionally biased toward pro residues. Residues 522 to 629 (TLTKSKSTPS…STTSSATKKS (108 aa)) are compositionally biased toward low complexity. The segment covering 631-640 (ITKTNPTDEQ) has biased composition (polar residues). Low complexity-rich tracts occupy residues 641–664 (TTTP…STSS) and 724–750 (NNNN…VSSF). A compositionally biased stretch (acidic residues) spans 826 to 835 (ILDEDDELMF).

This is an uncharacterized protein from Dictyostelium discoideum (Social amoeba).